A 319-amino-acid chain; its full sequence is MSAILFPEYTHRHLLGIEGLVPVEVTALLDRAEIYANRNRSANKVSDEMRGRTVINLFFENSTRTRTSFELAARRLGADVINMQVGSSSVAKGETLIDTAVTLNAMHPDVLVVRHAESGAAALLAQKVNCAVINAGDGAHEHPTQALLDALTIRRRKGRLGGLDVAICGDVLHSRVARSNIHLLTLMGARVRVVGPRPLIPSGIGELGVDIFHDMREGLRGVDIVMMLRIQMERMQGNFIPSVREYFRYFGLDREKLALAKPDALIMHPGPMNRGVEIDSDVADDFERSVIREQVEMGVAVRMAVLEVLSGNLASMETA.

Positions 64 and 65 each coordinate carbamoyl phosphate. K92 serves as a coordination point for L-aspartate. The carbamoyl phosphate site is built by R114, H142, and Q145. L-aspartate is bound by residues R175 and R229. Carbamoyl phosphate contacts are provided by G270 and P271.

It belongs to the aspartate/ornithine carbamoyltransferase superfamily. ATCase family. Heterododecamer (2C3:3R2) of six catalytic PyrB chains organized as two trimers (C3), and six regulatory PyrI chains organized as three dimers (R2).

It catalyses the reaction carbamoyl phosphate + L-aspartate = N-carbamoyl-L-aspartate + phosphate + H(+). It participates in pyrimidine metabolism; UMP biosynthesis via de novo pathway; (S)-dihydroorotate from bicarbonate: step 2/3. Its function is as follows. Catalyzes the condensation of carbamoyl phosphate and aspartate to form carbamoyl aspartate and inorganic phosphate, the committed step in the de novo pyrimidine nucleotide biosynthesis pathway. The chain is Aspartate carbamoyltransferase catalytic subunit from Rhodospirillum rubrum (strain ATCC 11170 / ATH 1.1.1 / DSM 467 / LMG 4362 / NCIMB 8255 / S1).